Consider the following 202-residue polypeptide: 3-isopropylmalate dehydratase small subunit 2 (202 aa).

It belongs to the LeuD family. LeuD type 1 subfamily. In terms of assembly, heterodimer of LeuC and LeuD.

It catalyses the reaction (2R,3S)-3-isopropylmalate = (2S)-2-isopropylmalate. Its pathway is amino-acid biosynthesis; L-leucine biosynthesis; L-leucine from 3-methyl-2-oxobutanoate: step 2/4. Functionally, catalyzes the isomerization between 2-isopropylmalate and 3-isopropylmalate, via the formation of 2-isopropylmaleate. The polypeptide is 3-isopropylmalate dehydratase small subunit 2 (Bordetella parapertussis (strain 12822 / ATCC BAA-587 / NCTC 13253)).